The following is a 74-amino-acid chain: ATP synthase subunit 9, mitochondrial (74 aa).

A run of 2 helical transmembrane segments spans residues 8–28 (IGAG…GNVF) and 50–70 (ILGF…AFLI).

Belongs to the ATPase C chain family. F-type ATPases have 2 components, CF(1) - the catalytic core - and CF(0) - the membrane proton channel. CF(1) has five subunits: alpha(3), beta(3), gamma(1), delta(1), epsilon(1). CF(0) has three main subunits: a, b and c.

Its subcellular location is the mitochondrion membrane. In terms of biological role, this protein is one of the chains of the nonenzymatic membrane component (F0) of mitochondrial ATPase. In Brassica napus (Rape), this protein is ATP synthase subunit 9, mitochondrial (ATP9).